We begin with the raw amino-acid sequence, 125 residues long: S-adenosylmethionine decarboxylase proenzyme (125 aa).

Serine 63 acts as the Schiff-base intermediate with substrate; via pyruvic acid in catalysis. Serine 63 bears the Pyruvic acid (Ser); by autocatalysis mark. Histidine 68 serves as the catalytic Proton acceptor; for processing activity. Cysteine 83 functions as the Proton donor; for catalytic activity in the catalytic mechanism.

Belongs to the prokaryotic AdoMetDC family. Type 1 subfamily. In terms of assembly, heterotetramer of two alpha and two beta chains arranged as a dimer of alpha/beta heterodimers. The cofactor is pyruvate. In terms of processing, is synthesized initially as an inactive proenzyme. Formation of the active enzyme involves a self-maturation process in which the active site pyruvoyl group is generated from an internal serine residue via an autocatalytic post-translational modification. Two non-identical subunits are generated from the proenzyme in this reaction, and the pyruvate is formed at the N-terminus of the alpha chain, which is derived from the carboxyl end of the proenzyme. The post-translation cleavage follows an unusual pathway, termed non-hydrolytic serinolysis, in which the side chain hydroxyl group of the serine supplies its oxygen atom to form the C-terminus of the beta chain, while the remainder of the serine residue undergoes an oxidative deamination to produce ammonia and the pyruvoyl group blocking the N-terminus of the alpha chain.

The enzyme catalyses S-adenosyl-L-methionine + H(+) = S-adenosyl 3-(methylsulfanyl)propylamine + CO2. Its pathway is amine and polyamine biosynthesis; S-adenosylmethioninamine biosynthesis; S-adenosylmethioninamine from S-adenosyl-L-methionine: step 1/1. Catalyzes the decarboxylation of S-adenosylmethionine to S-adenosylmethioninamine (dcAdoMet), the propylamine donor required for the synthesis of the polyamines spermine and spermidine from the diamine putrescine. The chain is S-adenosylmethionine decarboxylase proenzyme from Moorella thermoacetica (strain ATCC 39073 / JCM 9320).